Consider the following 183-residue polypeptide: Type II secretion system protein H (183 aa).

Residues 1–8 (MRRHRQSG) constitute a propeptide, leader sequence. Phe-9 is modified (N-methylphenylalanine). The chain crosses the membrane as a helical span at residues 9–28 (FTLLEVLLVAMLMGLVATAV).

Belongs to the GSP H family. In terms of assembly, type II secretion is composed of four main components: the outer membrane complex, the inner membrane complex, the cytoplasmic secretion ATPase and the periplasm-spanning pseudopilus. Interacts with core component ExeG. Cleaved by prepilin peptidase. Post-translationally, methylated by prepilin peptidase at the amino group of the N-terminal phenylalanine once the leader sequence is cleaved by prepilin peptidase.

The protein resides in the cell inner membrane. In terms of biological role, component of the type II secretion system required for the energy-dependent secretion of extracellular factors such as proteases and toxins from the periplasm. Part of the pseudopilus tip complex that is critical for the recognition and binding of secretion substrates. The protein is Type II secretion system protein H (exeH) of Aeromonas hydrophila.